We begin with the raw amino-acid sequence, 54 residues long: ATP synthase F(0) complex subunit 8 (54 aa).

Residues 8–24 (PWFSIMLLTWFTFSLLI) traverse the membrane as a helical segment.

Belongs to the ATPase protein 8 family. In terms of assembly, component of the ATP synthase complex composed at least of ATP5F1A/subunit alpha, ATP5F1B/subunit beta, ATP5MC1/subunit c (homooctomer), MT-ATP6/subunit a, MT-ATP8/subunit 8, ATP5ME/subunit e, ATP5MF/subunit f, ATP5MG/subunit g, ATP5MK/subunit k, ATP5MJ/subunit j, ATP5F1C/subunit gamma, ATP5F1D/subunit delta, ATP5F1E/subunit epsilon, ATP5PF/subunit F6, ATP5PB/subunit b, ATP5PD/subunit d, ATP5PO/subunit OSCP. ATP synthase complex consists of a soluble F(1) head domain (subunits alpha(3) and beta(3)) - the catalytic core - and a membrane F(0) domain - the membrane proton channel (subunits c, a, 8, e, f, g, k and j). These two domains are linked by a central stalk (subunits gamma, delta, and epsilon) rotating inside the F1 region and a stationary peripheral stalk (subunits F6, b, d, and OSCP).

Its subcellular location is the mitochondrion membrane. Functionally, subunit 8, of the mitochondrial membrane ATP synthase complex (F(1)F(0) ATP synthase or Complex V) that produces ATP from ADP in the presence of a proton gradient across the membrane which is generated by electron transport complexes of the respiratory chain. ATP synthase complex consist of a soluble F(1) head domain - the catalytic core - and a membrane F(1) domain - the membrane proton channel. These two domains are linked by a central stalk rotating inside the F(1) region and a stationary peripheral stalk. During catalysis, ATP synthesis in the catalytic domain of F(1) is coupled via a rotary mechanism of the central stalk subunits to proton translocation. In vivo, can only synthesize ATP although its ATP hydrolase activity can be activated artificially in vitro. Part of the complex F(0) domain. The polypeptide is ATP synthase F(0) complex subunit 8 (Gallus gallus (Chicken)).